Here is an 814-residue protein sequence, read N- to C-terminus: Exostosin-like-3 homolog (814 aa).

Residues 1–14 (MAIKLNGSSRSFVP) are Cytoplasmic-facing. The helical; Signal-anchor for type II membrane protein transmembrane segment at 15-35 (SLRVSAFLIFIFFVITYIIIY) threads the bilayer. N36, N227, N297, N322, N454, and N492 each carry an N-linked (GlcNAc...) asparagine glycan. Residues 36–814 (NVSFSEPSWI…QNHQKCFKYV (779 aa)) lie on the Lumenal side of the membrane. Positions 570, 595, 620, 625, 641, 642, and 643 each coordinate UDP-N-acetyl-alpha-D-glucosamine. D643 is a Mn(2+) binding site. N685 carries N-linked (GlcNAc...) asparagine glycosylation. Residues C726 and C774 are joined by a disulfide bond. Residues E727, D728, and R771 each coordinate UDP-N-acetyl-alpha-D-glucosamine. The active site involves D728.

It belongs to the glycosyltransferase 47 family. In terms of assembly, interacts with rib-1. Mn(2+) is required as a cofactor.

It localises to the endoplasmic reticulum membrane. The protein localises to the golgi apparatus membrane. It carries out the reaction 3-O-(beta-D-GlcA-(1-&gt;3)-beta-D-Gal-(1-&gt;3)-beta-D-Gal-(1-&gt;4)-beta-D-Xyl)-L-seryl-[protein] + UDP-N-acetyl-alpha-D-glucosamine = 3-O-(alpha-D-GlcNAc-(1-&gt;4)-beta-D-GlcA-(1-&gt;3)-beta-D-Gal-(1-&gt;3)-beta-D-Gal-(1-&gt;4)-beta-D-Xyl)-L-seryl-[protein] + UDP + H(+). The enzyme catalyses 3-O-{[(1-&gt;4)-beta-D-GlcA-(1-&gt;4)-alpha-D-GlcNAc](n)-(1-&gt;4)-beta-D-GlcA-(1-&gt;3)-beta-D-Gal-(1-&gt;3)-beta-D-Gal-(1-&gt;4)-beta-D-Xyl}-L-seryl-[protein] + UDP-N-acetyl-alpha-D-glucosamine = 3-O-{alpha-D-GlcNAc-[(1-&gt;4)-beta-D-GlcA-(1-&gt;4)-alpha-D-GlcNAc](n)-(1-&gt;4)-beta-D-GlcA-(1-&gt;3)-beta-D-Gal-(1-&gt;3)-beta-D-Gal-(1-&gt;4)-beta-D-Xyl}-L-seryl-[protein] + UDP + H(+). The catalysed reaction is 3-O-{alpha-D-GlcNAc-[(1-&gt;4)-beta-D-GlcA-(1-&gt;4)-alpha-D-GlcNAc](n)-(1-&gt;4)-beta-D-GlcA-(1-&gt;3)-beta-D-Gal-(1-&gt;3)-beta-D-Gal-(1-&gt;4)-beta-D-Xyl}-L-seryl-[protein] + UDP-alpha-D-glucuronate = 3-O-{[(1-&gt;4)-beta-D-GlcA-(1-&gt;4)-alpha-D-GlcNAc](n+1)-(1-&gt;4)-beta-D-GlcA-(1-&gt;3)-beta-D-Gal-(1-&gt;3)-beta-D-Gal-(1-&gt;4)-beta-D-Xyl}-L-seryl-[protein] + UDP + H(+). Its pathway is glycan metabolism; heparan sulfate biosynthesis. With respect to regulation, binding to rib-1 is required for GlcAT-II activity and for increasing GlcNAc-II activity in vitro. In terms of biological role, glycosyltransferase required for the biosynthesis of heparan sulfate. Initiates heparan sulfate synthesis by transferring GlcNAc to the (GlcA-Gal-Gal-Xyl-)Ser core linker (GlcNAcT-I activity). In association with rib-1, is also responsible for the alternating addition of beta-1-4-linked glucuronic acid (GlcA) and alpha-1-4-linked N-acetylglucosamine (GlcNAc) units to nascent heparan sulfate chains (GlcNAcT-II and GlcAT-II activities). Required for normal ventral epidermal enclosure during the early stages of embryonic development. In addition, involved in the elongation of the pharyngeal isthmus during the later stages of embryonic development. Involved in the directed migration of hermaphrodite-specific neurons. This Caenorhabditis elegans protein is Exostosin-like-3 homolog (rib-2).